A 424-amino-acid chain; its full sequence is Probable methyltransferase EP424R (424 aa).

An Adrift-type SAM-dependent 2'-O-MTase domain is found at 103–315 (QIVTNAWLKM…TYIVGKNRLR (213 aa)). The S-adenosyl-L-methionine site is built by glycine 135 and aspartate 228. Lysine 268 acts as the Proton acceptor in catalysis.

Its subcellular location is the virion. The polypeptide is Probable methyltransferase EP424R (Ornithodoros (relapsing fever ticks)).